A 620-amino-acid polypeptide reads, in one-letter code: Schwann cell myelin protein (620 aa).

A signal peptide spans 1–17; sequence MELLVLTVLLMGTGCIS. Residues 18–516 lie on the Extracellular side of the membrane; that stretch reads APWAAWMPPK…GGLVWAKVGP (499 aa). Positions 28-106 constitute an Ig-like V-type domain; that stretch reads MAALSGTCVQ…RDCTLNIARL (79 aa). 3 cysteine pairs are disulfide-bonded: Cys35/Cys164, Cys40/Cys99, and Cys158/Cys216. An N-acetylneuraminate-binding site is contributed by Arg117. 4 consecutive Ig-like C2-type domains span residues 151 to 233, 239 to 322, 325 to 407, and 414 to 495; these read GSEA…DVGL, PQVV…LRVA, PRAP…FNIS, and VLPA…NRHG. Asn222 is a glycosylation site (N-linked (GlcNAc...) asparagine). A disulfide bridge connects residues Cys260 and Cys304. Residues Asn314 and Asn331 are each glycosylated (N-linked (GlcNAc...) asparagine). A disulfide bond links Cys346 and Cys391. Asn405 carries N-linked (GlcNAc...) asparagine glycosylation. 2 cysteine pairs are disulfide-bonded: Cys420–Cys429 and Cys431–Cys488. Asn449 is a glycosylation site (N-linked (GlcNAc...) asparagine). Residues 517-536 traverse the membrane as a helical segment; it reads VGAVVAFAIVIAVVCYLSQS. Residues 537–620 are Cytoplasmic-facing; the sequence is RRKKGAGSPE…PPEYAEIRVK (84 aa). Disordered regions lie at residues 539-562 and 583-620; these read KKGAGSPEVTPVQPMAGPGGDPDL and VKEGSGAPQEVTPTSHPPMKPTRGPLEDPPEYAEIRVK.

This sequence belongs to the immunoglobulin superfamily. SIGLEC (sialic acid binding Ig-like lectin) family. Exclusively expressed by myelinating and nonmyelinating Schwann cells and oligodendrocytes.

The protein localises to the membrane. The sequence is that of Schwann cell myelin protein (SMP) from Coturnix japonica (Japanese quail).